The following is a 378-amino-acid chain: MAILDTKSSRWIPHNLLFLLLLLLLQSVPYGFGQTQTTPPGTTKTKPNDPVVVVITVLFLVIFFMVFGSIFCRRSNAQFSRSSIFRSTDADAESQVVRIRRLTARGLDAEAIETFPTFLYSEVKAVRIGKGGVECAVCLCEFEDDETLRLMPPCCHVFHADCVDVWLSEHSTCPLCRADLVLNQQGDDDDSTESYSGTDPGTISSSTDPERGMVLESSDAHLLDAVTWSNSNITPRSKSTGLSSWQITGILFPRSHSTGHSLIQPAGNLDRFTLRLPDDVRRQLMKTSRTMGHVALLPQARSSRSGYRSGSVGSERSAFPYGRKSNNNNRRLHSLSFSFSFRSGSVRSTFSGDAPKNLPTSIEAGERSFERLRPDERV.

The first 33 residues, 1-33 (MAILDTKSSRWIPHNLLFLLLLLLLQSVPYGFG), serve as a signal peptide directing secretion. Residues 51–71 (VVVVITVLFLVIFFMVFGSIF) traverse the membrane as a helical segment. The RING-type; atypical zinc-finger motif lies at 135 to 177 (CAVCLCEFEDDETLRLMPPCCHVFHADCVDVWLSEHSTCPLCR). Disordered stretches follow at residues 187-211 (DDDDSTESYSGTDPGTISSSTDPER), 300-326 (ARSSRSGYRSGSVGSERSAFPYGRKSN), and 350-378 (FSGDAPKNLPTSIEAGERSFERLRPDERV). The span at 193 to 207 (ESYSGTDPGTISSST) shows a compositional bias: polar residues. Low complexity predominate over residues 301–317 (RSSRSGYRSGSVGSERS). Residues 364–378 (AGERSFERLRPDERV) show a composition bias toward basic and acidic residues.

The protein belongs to the RING-type zinc finger family. ATL subfamily.

It localises to the membrane. The catalysed reaction is S-ubiquitinyl-[E2 ubiquitin-conjugating enzyme]-L-cysteine + [acceptor protein]-L-lysine = [E2 ubiquitin-conjugating enzyme]-L-cysteine + N(6)-ubiquitinyl-[acceptor protein]-L-lysine.. The protein operates within protein modification; protein ubiquitination. Its function is as follows. E3 ubiquitin-protein ligase able to catalyze polyubiquitination with ubiquitin-conjugating enzyme E2 UBC8 in vitro. May be involved in the early steps of the plant defense signaling pathway. The polypeptide is E3 ubiquitin-protein ligase ATL9 (ATL9) (Arabidopsis thaliana (Mouse-ear cress)).